The sequence spans 141 residues: Large ribosomal subunit protein uL11 (141 aa).

Belongs to the universal ribosomal protein uL11 family. Part of the ribosomal stalk of the 50S ribosomal subunit. Interacts with L10 and the large rRNA to form the base of the stalk. L10 forms an elongated spine to which L12 dimers bind in a sequential fashion forming a multimeric L10(L12)X complex. In terms of processing, one or more lysine residues are methylated.

Its function is as follows. Forms part of the ribosomal stalk which helps the ribosome interact with GTP-bound translation factors. This chain is Large ribosomal subunit protein uL11, found in Prochlorococcus marinus (strain MIT 9313).